We begin with the raw amino-acid sequence, 351 residues long: Sulfate/thiosulfate import ATP-binding protein CysA (351 aa).

Residues 3-237 (ITVRNLHKRF…PRSAFVYEFL (235 aa)) form the ABC transporter domain. 35-42 (GPSGCGKT) is an ATP binding site.

This sequence belongs to the ABC transporter superfamily. Sulfate/tungstate importer (TC 3.A.1.6) family. As to quaternary structure, the complex is composed of two ATP-binding proteins (CysA), two transmembrane proteins (CysT and CysW) and a solute-binding protein (CysP).

Its subcellular location is the cell inner membrane. It catalyses the reaction sulfate(out) + ATP + H2O = sulfate(in) + ADP + phosphate + H(+). It carries out the reaction thiosulfate(out) + ATP + H2O = thiosulfate(in) + ADP + phosphate + H(+). In terms of biological role, part of the ABC transporter complex CysAWTP involved in sulfate/thiosulfate import. Responsible for energy coupling to the transport system. In Burkholderia pseudomallei (strain K96243), this protein is Sulfate/thiosulfate import ATP-binding protein CysA.